The chain runs to 185 residues: ATP synthase subunit delta (185 aa).

Belongs to the ATPase delta chain family. In terms of assembly, F-type ATPases have 2 components, F(1) - the catalytic core - and F(0) - the membrane proton channel. F(1) has five subunits: alpha(3), beta(3), gamma(1), delta(1), epsilon(1). CF(0) has four main subunits: a(1), b(1), b'(1) and c(10-14). The alpha and beta chains form an alternating ring which encloses part of the gamma chain. F(1) is attached to F(0) by a central stalk formed by the gamma and epsilon chains, while a peripheral stalk is formed by the delta, b and b' chains.

Its subcellular location is the cellular thylakoid membrane. F(1)F(0) ATP synthase produces ATP from ADP in the presence of a proton or sodium gradient. F-type ATPases consist of two structural domains, F(1) containing the extramembraneous catalytic core and F(0) containing the membrane proton channel, linked together by a central stalk and a peripheral stalk. During catalysis, ATP synthesis in the catalytic domain of F(1) is coupled via a rotary mechanism of the central stalk subunits to proton translocation. Its function is as follows. This protein is part of the stalk that links CF(0) to CF(1). It either transmits conformational changes from CF(0) to CF(1) or is implicated in proton conduction. In Crocosphaera subtropica (strain ATCC 51142 / BH68) (Cyanothece sp. (strain ATCC 51142)), this protein is ATP synthase subunit delta.